A 1342-amino-acid chain; its full sequence is DNA-directed RNA polymerase subunit beta (1342 aa).

The protein belongs to the RNA polymerase beta chain family. As to quaternary structure, the RNAP catalytic core consists of 2 alpha, 1 beta, 1 beta' and 1 omega subunit. When a sigma factor is associated with the core the holoenzyme is formed, which can initiate transcription.

It catalyses the reaction RNA(n) + a ribonucleoside 5'-triphosphate = RNA(n+1) + diphosphate. DNA-dependent RNA polymerase catalyzes the transcription of DNA into RNA using the four ribonucleoside triphosphates as substrates. The protein is DNA-directed RNA polymerase subunit beta of Klebsiella pneumoniae (strain 342).